The chain runs to 265 residues: Glutamate racemase (265 aa).

Substrate is bound by residues 7-8 (DS) and 39-40 (YG). Cys-70 serves as the catalytic Proton donor/acceptor. 71-72 (NT) contributes to the substrate binding site. Residue Cys-177 is the Proton donor/acceptor of the active site.

This sequence belongs to the aspartate/glutamate racemases family.

It carries out the reaction L-glutamate = D-glutamate. Its pathway is cell wall biogenesis; peptidoglycan biosynthesis. In terms of biological role, provides the (R)-glutamate required for cell wall biosynthesis. In Prochlorococcus marinus (strain NATL1A), this protein is Glutamate racemase.